Reading from the N-terminus, the 202-residue chain is Interleukin-17D (202 aa).

An N-terminal signal peptide occupies residues 1–15 (MLVAGFLLALPPSWA). Positions 65 to 85 (QARNASCPAGGRPADRRFRPP) are disordered. Residues asparagine 68 and asparagine 181 are each glycosylated (N-linked (GlcNAc...) asparagine).

Belongs to the IL-17 family. As to expression, expressed preferentially in adipose, skeletal muscle and CNS.

It localises to the secreted. In terms of biological role, induces expression of IL6, CXCL8/IL8, and CSF2/GM-CSF from endothelial cells. This is Interleukin-17D (IL17D) from Homo sapiens (Human).